The sequence spans 496 residues: Glycine receptor subunit beta (496 aa).

An N-terminal signal peptide occupies residues 1-22 (MKFSLAVSFFILMSLLFEDACS). Residues 23–268 (KEKSSKKGKG…IFTLRRQVGF (246 aa)) are Extracellular-facing. The N-linked (GlcNAc...) asparagine glycan is linked to Asn54. Glycine is bound by residues Arg108 and Ser174. Cys183 and Cys197 are joined by a disulfide. The N-linked (GlcNAc...) asparagine glycan is linked to Asn242. Cys243 and Cys255 form a disulfide bridge. Residue Thr250 coordinates glycine. The chain crosses the membrane as a helical span at residues 269-289 (YMMGVYAPTLLIVVLSWLSFW). At 290 to 294 (INPDA) the chain is on the cytoplasmic side. The helical transmembrane segment at 295-315 (SAARVPLGIFSVLSLASECTT) threads the bilayer. The Extracellular segment spans residues 316-327 (LAAELPKVSYVK). Residues 328-349 (ALDVWLIACLLFGFASLVEYAV) traverse the membrane as a helical segment. The Cytoplasmic segment spans residues 350-471 (VQVMLNNPKR…KPVIPTAAKR (122 aa)). Thr391 carries the post-translational modification Phosphothreonine. The helical transmembrane segment at 472–495 (IDLYARALFPFCFLFFNVIYWSIY) threads the bilayer. Leu496 is a topological domain (extracellular).

This sequence belongs to the ligand-gated ion channel (TC 1.A.9) family. Glycine receptor (TC 1.A.9.3) subfamily. GLRB sub-subfamily. As to quaternary structure, forms heteropentamers with glycin receptor alpha subunits. Heteropentamers with GLRA1 can be composed of two GLRA1 and three GLRB subunits, or three GLRA1 and two GLRB subunits, or four GLRA1 subunits and one GLRB subunit. Forms heteropentamers with GLRA2. Functional GLRB-GLRA2 heteropentamers contain four GLRA2 subunits and one GLRB subunit, although alternative subunit composition cannot be excluded. Forms a heteropentamer with GLRA3. Interacts with GPHN. As to expression, detected in spinal cord and brain stem (at protein level). Detected in spinal cord, cerebellum and brain cortex.

The protein resides in the postsynaptic cell membrane. It is found in the cell membrane. Its subcellular location is the synapse. It localises to the perikaryon. The protein localises to the cell projection. The protein resides in the dendrite. It is found in the cytoplasm. It catalyses the reaction chloride(in) = chloride(out). Channel opening is triggered by extracellular glycine. Heteropentameric channels composed of GLRB and GLRA1 are activated by lower glycine levels than homopentameric GLRA1. Subunit of heteromeric glycine-gated chloride channels. Plays an important role in the down-regulation of neuronal excitability. Contributes to the generation of inhibitory postsynaptic currents. This chain is Glycine receptor subunit beta (Glrb), found in Rattus norvegicus (Rat).